A 153-amino-acid chain; its full sequence is Ribosome maturation factor RimP (153 aa).

This sequence belongs to the RimP family.

The protein resides in the cytoplasm. Functionally, required for maturation of 30S ribosomal subunits. The sequence is that of Ribosome maturation factor RimP from Coxiella burnetii (strain CbuG_Q212) (Coxiella burnetii (strain Q212)).